The following is a 482-amino-acid chain: NADH-quinone oxidoreductase subunit D (482 aa).

Residues 1 to 16 (MTTNTSTSSTTDDLTT) are compositionally biased toward low complexity. Residues 1 to 48 (MTTNTSTSSTTDDLTTGAPNGTGAPDGANGVGGPTGTVGGPGEHPAYE) form a disordered region. Residues 29-42 (NGVGGPTGTVGGPG) show a composition bias toward gly residues.

The protein belongs to the complex I 49 kDa subunit family. In terms of assembly, NDH-1 is composed of 14 different subunits. Subunits NuoB, C, D, E, F, and G constitute the peripheral sector of the complex.

It is found in the cell membrane. It carries out the reaction a quinone + NADH + 5 H(+)(in) = a quinol + NAD(+) + 4 H(+)(out). In terms of biological role, NDH-1 shuttles electrons from NADH, via FMN and iron-sulfur (Fe-S) centers, to quinones in the respiratory chain. The immediate electron acceptor for the enzyme in this species is believed to be a menaquinone. Couples the redox reaction to proton translocation (for every two electrons transferred, four hydrogen ions are translocated across the cytoplasmic membrane), and thus conserves the redox energy in a proton gradient. The protein is NADH-quinone oxidoreductase subunit D of Frankia casuarinae (strain DSM 45818 / CECT 9043 / HFP020203 / CcI3).